The chain runs to 707 residues: Translation initiation factor eIF2B subunit epsilon (707 aa).

2 disordered regions span residues 489–526 (HDDI…SVKF) and 686–707 (AEEE…DESD). A W2 domain is found at 516–693 (DNPIEPDSVK…KSAEEESDDS (178 aa)). Over residues 688 to 707 (EESDDSDDSDDDDDDSDESD) the composition is skewed to acidic residues.

It belongs to the eIF-2B gamma/epsilon subunits family. In terms of assembly, component of the translation initiation factor 2B (eIF2B) complex which is a heterodecamer of two sets of five different subunits: alpha, beta, gamma, delta and epsilon. Subunits alpha, beta and delta comprise a regulatory subcomplex and subunits epsilon and gamma comprise a catalytic subcomplex. Within the complex, the hexameric regulatory complex resides at the center, with the two heterodimeric catalytic subcomplexes bound on opposite sides.

It localises to the cytoplasm. The protein resides in the cytosol. Functionally, acts as a component of the translation initiation factor 2B (eIF2B) complex, which catalyzes the exchange of GDP for GTP on eukaryotic initiation factor 2 (eIF2) gamma subunit. Its guanine nucleotide exchange factor activity is repressed when bound to eIF2 complex phosphorylated on the alpha subunit, thereby limiting the amount of methionyl-initiator methionine tRNA available to the ribosome and consequently global translation is repressed. In Dictyostelium discoideum (Social amoeba), this protein is Translation initiation factor eIF2B subunit epsilon (eif2b5).